The sequence spans 155 residues: Protein SREK1IP1 (155 aa).

Residues 13–30 (AGCKKCGYPGHLTFECRN) form a CCHC-type zinc finger. Residues 44-155 (VSSTSSEDSD…TPNSSEFSRK (112 aa)) form a disordered region. S52 carries the phosphoserine modification. A compositionally biased stretch (basic and acidic residues) spans 66–84 (QEKRINEEEEKKKEKSKEK). The segment covering 85-94 (IKLKKKRKRS) has biased composition (basic residues). Residues S96 and S97 each carry the phosphoserine modification. Residues 107 to 142 (QKKQKYQKKEKKKEKKSKSKKGKHHKKEKKKRKKEK) are compositionally biased toward basic residues. At T146 the chain carries Phosphothreonine. The segment covering 146 to 155 (TPNSSEFSRK) has biased composition (polar residues).

Interacts with SREK1/SFRS12.

In terms of biological role, possible splicing regulator involved in the control of cellular survival. The protein is Protein SREK1IP1 (SREK1IP1) of Homo sapiens (Human).